The chain runs to 49 residues: Large ribosomal subunit protein bL33B (49 aa).

Belongs to the bacterial ribosomal protein bL33 family.

This chain is Large ribosomal subunit protein bL33B, found in Shouchella clausii (strain KSM-K16) (Alkalihalobacillus clausii).